Reading from the N-terminus, the 191-residue chain is Prostaglandin-H2 D-isomerase (191 aa).

Positions methionine 1–alanine 24 are cleaved as a signal peptide. Residue glutamine 25 is modified to Pyrrolidone carboxylic acid. Asparagine 51 carries N-linked (GlcNAc...) asparagine glycosylation. Cysteine 65 acts as the Nucleophile in catalysis. N-linked (GlcNAc...) asparagine glycosylation is present at asparagine 78. A disulfide bridge links cysteine 89 with cysteine 186.

The protein belongs to the calycin superfamily. Lipocalin family. Monomer.

The protein resides in the rough endoplasmic reticulum. The protein localises to the nucleus membrane. It is found in the golgi apparatus. It localises to the cytoplasm. Its subcellular location is the perinuclear region. The protein resides in the secreted. The catalysed reaction is prostaglandin H2 = prostaglandin D2. Catalyzes the conversion of PGH2 to PGD2, a prostaglandin involved in smooth muscle contraction/relaxation and a potent inhibitor of platelet aggregation. Involved in a variety of CNS functions, such as sedation, NREM sleep and PGE2-induced allodynia, and may have an anti-apoptotic role in oligodendrocytes. Binds small non-substrate lipophilic molecules, including biliverdin, bilirubin, retinal, retinoic acid and thyroid hormone, and may act as a scavenger for harmful hydrophobic molecules and as a secretory retinoid and thyroid hormone transporter. Possibly involved in development and maintenance of the blood-brain, blood-retina, blood-aqueous humor and blood-testis barrier. It is likely to play important roles in both maturation and maintenance of the central nervous system and male reproductive system. Involved in PLA2G3-dependent maturation of mast cells. PLA2G3 is secreted by immature mast cells and acts on nearby fibroblasts upstream to PTDGS to synthesize PGD2, which in turn promotes mast cell maturation and degranulation via PTGDR. This chain is Prostaglandin-H2 D-isomerase (PTGDS), found in Ursus arctos (Brown bear).